We begin with the raw amino-acid sequence, 355 residues long: uncharacterized protein (355 aa).

This sequence belongs to the 3-beta-HSD family.

This is an uncharacterized protein from Frog virus 3 (isolate Goorha) (FV-3).